Consider the following 273-residue polypeptide: NAD(P)H-hydrate epimerase (273 aa).

The YjeF N-terminal domain maps to 52-260 (AQQIDQELFN…GIIQKYELNL (209 aa)). 105–109 (NNGGD) contacts (6S)-NADPHX. Residues N106 and D170 each coordinate K(+). (6S)-NADPHX is bound by residues 174 to 180 (GFSFKGE) and D203. Residue S206 participates in K(+) binding.

The protein belongs to the NnrE/AIBP family. Requires K(+) as cofactor.

The catalysed reaction is (6R)-NADHX = (6S)-NADHX. It catalyses the reaction (6R)-NADPHX = (6S)-NADPHX. Catalyzes the epimerization of the S- and R-forms of NAD(P)HX, a damaged form of NAD(P)H that is a result of enzymatic or heat-dependent hydration. This is a prerequisite for the S-specific NAD(P)H-hydrate dehydratase to allow the repair of both epimers of NAD(P)HX. This Branchiostoma floridae (Florida lancelet) protein is NAD(P)H-hydrate epimerase.